The chain runs to 295 residues: uncharacterized protein (295 aa).

Positions 151–290 constitute a Resolvase/invertase-type recombinase catalytic domain; the sequence is RTAVCARLSS…RAVAAAARAG (140 aa). Residue serine 159 is the O-(5'-phospho-DNA)-serine intermediate of the active site.

This is an uncharacterized protein from Mycobacterium bovis (strain ATCC BAA-935 / AF2122/97).